We begin with the raw amino-acid sequence, 267 residues long: Endonuclease NucS (267 aa).

The protein belongs to the NucS endonuclease family.

Its subcellular location is the cytoplasm. Cleaves both 3' and 5' ssDNA extremities of branched DNA structures. The polypeptide is Endonuclease NucS (Pyrococcus furiosus (strain ATCC 43587 / DSM 3638 / JCM 8422 / Vc1)).